Here is a 72-residue protein sequence, read N- to C-terminus: Translation initiation factor IF-1 (72 aa).

Positions 1–72 (MAKEDVIEMQ…SKGRIVFRAR (72 aa)) constitute an S1-like domain.

Belongs to the IF-1 family. Component of the 30S ribosomal translation pre-initiation complex which assembles on the 30S ribosome in the order IF-2 and IF-3, IF-1 and N-formylmethionyl-tRNA(fMet); mRNA recruitment can occur at any time during PIC assembly.

Its subcellular location is the cytoplasm. In terms of biological role, one of the essential components for the initiation of protein synthesis. Stabilizes the binding of IF-2 and IF-3 on the 30S subunit to which N-formylmethionyl-tRNA(fMet) subsequently binds. Helps modulate mRNA selection, yielding the 30S pre-initiation complex (PIC). Upon addition of the 50S ribosomal subunit IF-1, IF-2 and IF-3 are released leaving the mature 70S translation initiation complex. The polypeptide is Translation initiation factor IF-1 (Photobacterium profundum (strain SS9)).